We begin with the raw amino-acid sequence, 691 residues long: Probable serine/threonine-protein kinase pXi (691 aa).

One can recognise a Protein kinase domain in the interval 18–263 (YEIGSQIGNG…IDQTLKHPWI (246 aa)). Residues 24 to 32 (IGNGKFAQV) and Lys-47 each bind ATP. The active-site Proton acceptor is Asp-137. Disordered stretches follow at residues 314–350 (TPIKSNDENNNNNNNNNNNNNNNEILDKKSNENENEN), 420–447 (ENDSSSSETYSSSSPIENGGGGGDKFTS), 510–536 (QHNNNINNNNNNINNGGSTSINNGNGT), and 600–620 (GGSGCSSSSDESTGGSFKKDK). The span at 322–336 (NNNNNNNNNNNNNNN) shows a compositional bias: low complexity. The span at 338-350 (ILDKKSNENENEN) shows a compositional bias: basic and acidic residues. 3 stretches are compositionally biased toward low complexity: residues 423–433 (SSSSETYSSSS), 512–536 (NNNINNNNNNINNGGSTSINNGNGT), and 600–615 (GGSGCSSSSDESTGGS). Positions 642 to 691 (PKETMDKLASVLSNYKQKNQEKSLKVKYEKQKDKYKKLKSQLKKDKSLLK) form a coiled coil.

It belongs to the protein kinase superfamily. CAMK Ser/Thr protein kinase family.

The catalysed reaction is L-seryl-[protein] + ATP = O-phospho-L-seryl-[protein] + ADP + H(+). It carries out the reaction L-threonyl-[protein] + ATP = O-phospho-L-threonyl-[protein] + ADP + H(+). This chain is Probable serine/threonine-protein kinase pXi (pXi), found in Dictyostelium discoideum (Social amoeba).